A 168-amino-acid polypeptide reads, in one-letter code: MVEDILAPGLRVVFCGINPGLSSAGTGFPFAHPANRFWKVIYQAGFTDRQLKPQEAQHLLDYRCGVTKLVDRPTVQANEVSKQELHAGGRKLIEKIEDYQPQALAILGKRAYEQGFSQRGAQWGKQTLTIGSTQIWVLPNPSGLSRVSLEKLVEAYRELDQALVVRGR.

The protein belongs to the uracil-DNA glycosylase (UDG) superfamily. TDG/mug family. In terms of assembly, binds DNA as a monomer.

It localises to the cytoplasm. The catalysed reaction is Specifically hydrolyzes mismatched double-stranded DNA and polynucleotides, releasing free uracil.. Excises ethenocytosine and uracil, which can arise by alkylation or deamination of cytosine, respectively, from the corresponding mispairs with guanine in ds-DNA. It is capable of hydrolyzing the carbon-nitrogen bond between the sugar-phosphate backbone of the DNA and the mispaired base. The complementary strand guanine functions in substrate recognition. Required for DNA damage lesion repair in stationary-phase cells. This chain is G/U mismatch-specific DNA glycosylase, found in Escherichia coli O139:H28 (strain E24377A / ETEC).